The primary structure comprises 445 residues: Beclin-1 (445 aa).

The BH3 motif lies at 103 to 122; that stretch reads TMENLSRRLKVTGDLFDIMS. A coiled-coil region spans residues 137 to 264; it reads DTLLDQLDTQ…QLDKLKKTNV (128 aa). Residues 240 to 445 are evolutionary conserved domain (ECD); sequence DDLKSVENQM…AWVSSQFYNK (206 aa). Positions 420–445 are required for membrane-association; that stretch reads WTKALKFMLTNLKWGLAWVSSQFYNK.

It belongs to the beclin family. In terms of assembly, component of the PI3K (PI3KC3/PI3K-III/class III phosphatidylinositol 3-kinase) complex. May be proteolytically processed by caspases; the C-terminal fragment(s) may induce apoptosis.

It is found in the cytoplasm. It localises to the golgi apparatus. The protein resides in the trans-Golgi network membrane. Its subcellular location is the endosome membrane. The protein localises to the endoplasmic reticulum membrane. It is found in the mitochondrion membrane. It localises to the cytoplasmic vesicle. The protein resides in the autophagosome. Functionally, plays a central role in autophagy. Acts as core subunit of different PI3K complex forms that mediate formation of phosphatidylinositol 3-phosphate and are believed to play a role in multiple membrane trafficking pathways: PI3KC3-C1 is involved in initiation of autophagosomes and PI3KC3-C2 in maturation of autophagosomes and endocytosis. Involved in regulation of degradative endocytic trafficking and required for the abscission step in cytokinesis, probably in the context of PI3KC3-C2. Essential for the formation of PI3KC3-C2 but not PI3KC3-C1 PI3K complex forms. Involved in endocytosis including endosome formation in neuronal cells. In Xenopus tropicalis (Western clawed frog), this protein is Beclin-1 (becn1).